The following is a 954-amino-acid chain: Glycine dehydrogenase (decarboxylating) (954 aa).

Lys704 is subject to N6-(pyridoxal phosphate)lysine.

The protein belongs to the GcvP family. As to quaternary structure, the glycine cleavage system is composed of four proteins: P, T, L and H. The cofactor is pyridoxal 5'-phosphate.

It carries out the reaction N(6)-[(R)-lipoyl]-L-lysyl-[glycine-cleavage complex H protein] + glycine + H(+) = N(6)-[(R)-S(8)-aminomethyldihydrolipoyl]-L-lysyl-[glycine-cleavage complex H protein] + CO2. Functionally, the glycine cleavage system catalyzes the degradation of glycine. The P protein binds the alpha-amino group of glycine through its pyridoxal phosphate cofactor; CO(2) is released and the remaining methylamine moiety is then transferred to the lipoamide cofactor of the H protein. This is Glycine dehydrogenase (decarboxylating) from Agrobacterium fabrum (strain C58 / ATCC 33970) (Agrobacterium tumefaciens (strain C58)).